The primary structure comprises 59 residues: uncharacterized protein (59 aa).

The protein resides in the mitochondrion. This is an uncharacterized protein from Ascobolus immersus.